We begin with the raw amino-acid sequence, 392 residues long: Alanine--glyoxylate aminotransferase (392 aa).

An N6-(pyridoxal phosphate)lysine modification is found at K209. At K225 the chain carries N6-acetyllysine; alternate. Residue K225 is modified to N6-succinyllysine; alternate. Residues K234 and K312 each carry the N6-acetyllysine modification. A substrate-binding site is contributed by R360. The Microbody targeting signal motif lies at 390–392; the sequence is SQL.

The protein belongs to the class-V pyridoxal-phosphate-dependent aminotransferase family. Homodimer. Requires pyridoxal 5'-phosphate as cofactor.

The protein localises to the peroxisome. It carries out the reaction L-serine + pyruvate = 3-hydroxypyruvate + L-alanine. The catalysed reaction is glyoxylate + L-alanine = glycine + pyruvate. Peroxisomal aminotransferase that catalyzes the transamination of glyoxylate to glycine and contributes to the glyoxylate detoxification. Also catalyzes the transamination between L-serine and pyruvate and contributes to gluconeogenesis from the L-serine metabolism. This chain is Alanine--glyoxylate aminotransferase, found in Oryctolagus cuniculus (Rabbit).